We begin with the raw amino-acid sequence, 824 residues long: Leucine--tRNA ligase (824 aa).

The 'HIGH' region signature appears at 41-51 (PYPSGTLHVGH). The 'KMSKS' region motif lies at 580–584 (KMSKS). Position 583 (K583) interacts with ATP.

This sequence belongs to the class-I aminoacyl-tRNA synthetase family.

The protein resides in the cytoplasm. It catalyses the reaction tRNA(Leu) + L-leucine + ATP = L-leucyl-tRNA(Leu) + AMP + diphosphate. The chain is Leucine--tRNA ligase from Thermotoga petrophila (strain ATCC BAA-488 / DSM 13995 / JCM 10881 / RKU-1).